The following is a 159-amino-acid chain: NAD(P)H-quinone oxidoreductase subunit I, chloroplastic (159 aa).

4Fe-4S ferredoxin-type domains follow at residues 55–84 (GRIH…VDWN) and 95–124 (KNYS…MTEE). [4Fe-4S] cluster contacts are provided by Cys-64, Cys-67, Cys-70, Cys-74, Cys-104, Cys-107, Cys-110, and Cys-114.

The protein belongs to the complex I 23 kDa subunit family. As to quaternary structure, NDH is composed of at least 16 different subunits, 5 of which are encoded in the nucleus. The cofactor is [4Fe-4S] cluster.

It localises to the plastid. The protein resides in the chloroplast thylakoid membrane. It carries out the reaction a plastoquinone + NADH + (n+1) H(+)(in) = a plastoquinol + NAD(+) + n H(+)(out). The catalysed reaction is a plastoquinone + NADPH + (n+1) H(+)(in) = a plastoquinol + NADP(+) + n H(+)(out). In terms of biological role, NDH shuttles electrons from NAD(P)H:plastoquinone, via FMN and iron-sulfur (Fe-S) centers, to quinones in the photosynthetic chain and possibly in a chloroplast respiratory chain. The immediate electron acceptor for the enzyme in this species is believed to be plastoquinone. Couples the redox reaction to proton translocation, and thus conserves the redox energy in a proton gradient. The protein is NAD(P)H-quinone oxidoreductase subunit I, chloroplastic of Chara vulgaris (Common stonewort).